Here is a 251-residue protein sequence, read N- to C-terminus: Triosephosphate isomerase (251 aa).

10–12 (NWK) contributes to the substrate binding site. Catalysis depends on histidine 99, which acts as the Electrophile. Glutamate 167 functions as the Proton acceptor in the catalytic mechanism. Substrate is bound by residues glycine 173, serine 211, and 232 to 233 (GG).

The protein belongs to the triosephosphate isomerase family. As to quaternary structure, homodimer.

It localises to the cytoplasm. It carries out the reaction D-glyceraldehyde 3-phosphate = dihydroxyacetone phosphate. It participates in carbohydrate biosynthesis; gluconeogenesis. It functions in the pathway carbohydrate degradation; glycolysis; D-glyceraldehyde 3-phosphate from glycerone phosphate: step 1/1. Functionally, involved in the gluconeogenesis. Catalyzes stereospecifically the conversion of dihydroxyacetone phosphate (DHAP) to D-glyceraldehyde-3-phosphate (G3P). In Neisseria meningitidis serogroup A / serotype 4A (strain DSM 15465 / Z2491), this protein is Triosephosphate isomerase.